A 188-amino-acid polypeptide reads, in one-letter code: Elongation factor P (188 aa).

Belongs to the elongation factor P family.

It localises to the cytoplasm. It functions in the pathway protein biosynthesis; polypeptide chain elongation. Its function is as follows. Involved in peptide bond synthesis. Stimulates efficient translation and peptide-bond synthesis on native or reconstituted 70S ribosomes in vitro. Probably functions indirectly by altering the affinity of the ribosome for aminoacyl-tRNA, thus increasing their reactivity as acceptors for peptidyl transferase. The sequence is that of Elongation factor P from Rhodospirillum centenum (strain ATCC 51521 / SW).